We begin with the raw amino-acid sequence, 371 residues long: Bifunctional enzyme IspD/IspF (371 aa).

The tract at residues 1 to 210 is 2-C-methyl-D-erythritol 4-phosphate cytidylyltransferase; that stretch reads MSEMSLIMLA…LNLPTPSFEI (210 aa). The interval 211-371 is 2-C-methyl-D-erythritol 2,4-cyclodiphosphate synthase; sequence FTGNGFDVHE…NLKYFDWTRL (161 aa). Residues aspartate 217 and histidine 219 each contribute to the a divalent metal cation site. Residues 217 to 219 and 243 to 244 contribute to the 4-CDP-2-C-methyl-D-erythritol 2-phosphate site; these read DVH and HS. Histidine 251 is a binding site for a divalent metal cation. Residues 265–267, 270–274, 341–344, phenylalanine 348, and arginine 351 contribute to the 4-CDP-2-C-methyl-D-erythritol 2-phosphate site; these read DIG, YPDTD, and TTTE.

This sequence in the N-terminal section; belongs to the IspD/TarI cytidylyltransferase family. IspD subfamily. It in the C-terminal section; belongs to the IspF family. A divalent metal cation is required as a cofactor.

It carries out the reaction 2-C-methyl-D-erythritol 4-phosphate + CTP + H(+) = 4-CDP-2-C-methyl-D-erythritol + diphosphate. The catalysed reaction is 4-CDP-2-C-methyl-D-erythritol 2-phosphate = 2-C-methyl-D-erythritol 2,4-cyclic diphosphate + CMP. It functions in the pathway isoprenoid biosynthesis; isopentenyl diphosphate biosynthesis via DXP pathway; isopentenyl diphosphate from 1-deoxy-D-xylulose 5-phosphate: step 2/6. Its pathway is isoprenoid biosynthesis; isopentenyl diphosphate biosynthesis via DXP pathway; isopentenyl diphosphate from 1-deoxy-D-xylulose 5-phosphate: step 4/6. In terms of biological role, bifunctional enzyme that catalyzes the formation of 4-diphosphocytidyl-2-C-methyl-D-erythritol from CTP and 2-C-methyl-D-erythritol 4-phosphate (MEP) (IspD), and catalyzes the conversion of 4-diphosphocytidyl-2-C-methyl-D-erythritol 2-phosphate (CDP-ME2P) to 2-C-methyl-D-erythritol 2,4-cyclodiphosphate (ME-CPP) with a corresponding release of cytidine 5-monophosphate (CMP) (IspF). This Campylobacter jejuni (strain RM1221) protein is Bifunctional enzyme IspD/IspF.